A 202-amino-acid chain; its full sequence is MGSVSNQQFAGAKPGEEPSGDSPKAENESQPLHGSGICKWFNVRMGFGFLSMTAKGGAMLDSPVDVFVHQSKLHMEGFRSLKEGEAVEFTFKKSSKGLESIRVTGPGGVFCIGSERRPKSKSLQKRRSKGDRCYNCGGLDHHAKECKLPPQPKKCHFCQSISHMVANCPAKAQQSPSSQGKPAYFREKEDMHSSALLPETRE.

The interval 1-31 is disordered; sequence MGSVSNQQFAGAKPGEEPSGDSPKAENESQP. Positions 33-106 constitute a CSD domain; it reads HGSGICKWFN…GLESIRVTGP (74 aa). Positions 107 to 130 are flexible linker; sequence GGVFCIGSERRPKSKSLQKRRSKG. 2 CCHC-type zinc fingers span residues 131–148 and 153–170; these read DRCY…ECKL and KKCH…NCPA. Zn(2+)-binding residues include Cys-133, Cys-136, His-141, Cys-146, Cys-155, Cys-158, His-163, and Cys-168. Residues 169 to 202 form a disordered region; the sequence is PAKAQQSPSSQGKPAYFREKEDMHSSALLPETRE.

This sequence belongs to the lin-28 family. In terms of assembly, monomer.

The protein localises to the cytoplasm. Its subcellular location is the rough endoplasmic reticulum. It is found in the P-body. It localises to the stress granule. The protein resides in the nucleus. The protein localises to the nucleolus. In terms of biological role, RNA-binding protein that inhibits processing of pre-let-7 miRNAs and regulates translation of mRNAs that control developmental timing, pluripotency and metabolism. Seems to recognize a common structural G-quartet (G4) feature in its miRNA and mRNA targets. 'Translational enhancer' that drives specific mRNAs to polysomes and increases the efficiency of protein synthesis. Its association with the translational machinery and target mRNAs results in an increased number of initiation events per molecule of mRNA and, indirectly, in mRNA stabilization. Suppressor of microRNA (miRNA) biogenesis, including that of let-7. Binds specific target miRNA precursors (pre-miRNAs), recognizing an 5'-GGAG-3' motif found in their terminal loop, and recruits uridylyltransferase. This results in the terminal uridylation of target pre-miRNAs. Uridylated pre-miRNAs fail to be processed by Dicer and undergo degradation. Localized to the periendoplasmic reticulum area, binds to a large number of spliced mRNAs and inhibits the translation of mRNAs destined for the ER, reducing the synthesis of transmembrane proteins, ER or Golgi lumen proteins, and secretory proteins. Binds to and enhances the translation of mRNAs for several metabolic enzymes, increasing glycolysis and oxidative phosphorylation. Which, with the let-7 repression may enhance tissue repair in adult tissue. This is Protein lin-28 homolog A (LIN28A) from Gallus gallus (Chicken).